The sequence spans 396 residues: MTHISTHRPRIAVIGGGIAGLTVAASLLRAGIECTVYEQATVFADAGAGIQLAPNSARILHRLGLAGALERRATRAHAIETRRWRDGAPLARTELGASCVERYGAPYYLIQRADLHRSLLELLPPGVVRHSAACTAAEERPDGVTLRFADGTSEEAGVVVGADGIHSALRNTLVGDRPRFSGHTVHRGLVAADRLPSLFEVPKVLFWLGPNGHVTSYPIARHGLVHFSAVITSPEWDPEVWSAPSRPEEAAAAFAGWNSDVAELIGAAEGTHHWALFDRDCVGGWSTGRMTLAGDAAHPMVPYLSQGANQAIEDAWVLADLLGAADVDPGPALRRYEELRLPRVREVHRRSRERGHEFHLPDGPRQRLRDRSMPTAERLDDYAWLYGFEAAPVGSR.

FAD is bound by residues alanine 19, 38–39, and arginine 112; that span reads EQ. The Proton acceptor role is filled by tyrosine 217. Aspartate 295 is a binding site for FAD.

The protein belongs to the 6-hydroxynicotinate 3-monooxygenase family. FAD serves as cofactor.

It catalyses the reaction 3-amino-4-hydroxybenzoate + NADPH + O2 + H(+) = 3-amino-2,4-dihydroxybenzoate + NADP(+) + H2O. Its pathway is antibiotic biosynthesis. Part of a gene cluster involved in the biosynthesis of thioplatencin (ThioPTN) and platencin (PTN), potent and selective inhibitors of bacterial and mammalian fatty acid synthases. Catalyzes the hydroxylation of 3-amino-4-hydroxybenzoate (3,4-AHBA) to 3-amino-2,4-dihydroxybenzoate (3,2,4-ADHBA). The sequence is that of 3-amino-4-hydroxybenzoate 2-monooxygenase PtnB3 from Streptomyces platensis.